The sequence spans 673 residues: Citrate exporter 1 (673 aa).

The segment at 1-44 (MFNLNTKSSKEPEVTEVAVDSTPSSPVTRESSPESSPDNSAVDL) is disordered. Polar residues predominate over residues 21–39 (STPSSPVTRESSPESSPDN). The chain crosses the membrane as a helical span at residues 67–87 (FLVFGAMAFCMLVSFMDQNGI). The N-linked (GlcNAc...) asparagine glycan is linked to N99. The next 4 membrane-spanning stretches (helical) occupy residues 103–123 (TISW…VLYG), 133–153 (LVFM…ACAQ), 164–184 (FSGI…SDIV), and 194–214 (GILG…GAAF). Residue N217 is glycosylated (N-linked (GlcNAc...) asparagine). 8 helical membrane-spanning segments follow: residues 222–242 (AIFY…FFIL), 261–281 (PGLF…AGGG), 292–312 (ISML…EGFF), 322–342 (IFGT…GIAY), 364–384 (AAGM…ISGQ), 393–413 (LEVI…KCFW), 419–439 (MALL…CFQP), and 465–485 (SFGG…SLKA). N526 carries an N-linked (GlcNAc...) asparagine glycan. A helical transmembrane segment spans residues 529-549 (HTVFVFLCPIVGACLLVTVFV). The span at 564–596 (AKTVEDKDKDESGTDCEDMTKGEVLVSEKEGKL) shows a compositional bias: basic and acidic residues. Disordered regions lie at residues 564 to 608 (AKTV…MHFG) and 636 to 673 (FPPM…IQEE). Residues N599 and N662 are each glycosylated (N-linked (GlcNAc...) asparagine).

Belongs to the major facilitator superfamily.

The protein resides in the cell membrane. The enzyme catalyses citrate(in) = citrate(out). In terms of biological role, transmembrane transporter that exports citrate across the cell membrane. The protein is Citrate exporter 1 of Yarrowia lipolytica (strain CLIB 122 / E 150) (Yeast).